The primary structure comprises 179 residues: Large ribosomal subunit protein uL5 (179 aa).

It belongs to the universal ribosomal protein uL5 family. In terms of assembly, part of the 50S ribosomal subunit; part of the 5S rRNA/L5/L18/L25 subcomplex. Contacts the 5S rRNA and the P site tRNA. Forms a bridge to the 30S subunit in the 70S ribosome.

In terms of biological role, this is one of the proteins that bind and probably mediate the attachment of the 5S RNA into the large ribosomal subunit, where it forms part of the central protuberance. In the 70S ribosome it contacts protein S13 of the 30S subunit (bridge B1b), connecting the 2 subunits; this bridge is implicated in subunit movement. Contacts the P site tRNA; the 5S rRNA and some of its associated proteins might help stabilize positioning of ribosome-bound tRNAs. This is Large ribosomal subunit protein uL5 from Enterococcus faecalis (strain ATCC 700802 / V583).